The sequence spans 316 residues: 4-hydroxy-3-methylbut-2-enyl diphosphate reductase (316 aa).

[4Fe-4S] cluster is bound at residue Cys12. 2 residues coordinate (2E)-4-hydroxy-3-methylbut-2-enyl diphosphate: His41 and His74. Dimethylallyl diphosphate is bound by residues His41 and His74. 2 residues coordinate isopentenyl diphosphate: His41 and His74. Cys96 is a [4Fe-4S] cluster binding site. His124 lines the (2E)-4-hydroxy-3-methylbut-2-enyl diphosphate pocket. His124 contacts dimethylallyl diphosphate. His124 lines the isopentenyl diphosphate pocket. Glu126 acts as the Proton donor in catalysis. Residue Thr167 participates in (2E)-4-hydroxy-3-methylbut-2-enyl diphosphate binding. Position 197 (Cys197) interacts with [4Fe-4S] cluster. Residues Ser225, Ser226, Asn227, and Ser269 each contribute to the (2E)-4-hydroxy-3-methylbut-2-enyl diphosphate site. Dimethylallyl diphosphate is bound by residues Ser225, Ser226, Asn227, and Ser269. Isopentenyl diphosphate-binding residues include Ser225, Ser226, Asn227, and Ser269.

Belongs to the IspH family. Homodimer. The cofactor is [4Fe-4S] cluster.

The catalysed reaction is isopentenyl diphosphate + 2 oxidized [2Fe-2S]-[ferredoxin] + H2O = (2E)-4-hydroxy-3-methylbut-2-enyl diphosphate + 2 reduced [2Fe-2S]-[ferredoxin] + 2 H(+). The enzyme catalyses dimethylallyl diphosphate + 2 oxidized [2Fe-2S]-[ferredoxin] + H2O = (2E)-4-hydroxy-3-methylbut-2-enyl diphosphate + 2 reduced [2Fe-2S]-[ferredoxin] + 2 H(+). The protein operates within isoprenoid biosynthesis; dimethylallyl diphosphate biosynthesis; dimethylallyl diphosphate from (2E)-4-hydroxy-3-methylbutenyl diphosphate: step 1/1. It functions in the pathway isoprenoid biosynthesis; isopentenyl diphosphate biosynthesis via DXP pathway; isopentenyl diphosphate from 1-deoxy-D-xylulose 5-phosphate: step 6/6. Functionally, catalyzes the conversion of 1-hydroxy-2-methyl-2-(E)-butenyl 4-diphosphate (HMBPP) into a mixture of isopentenyl diphosphate (IPP) and dimethylallyl diphosphate (DMAPP). Acts in the terminal step of the DOXP/MEP pathway for isoprenoid precursor biosynthesis. This chain is 4-hydroxy-3-methylbut-2-enyl diphosphate reductase, found in Escherichia coli O6:H1 (strain CFT073 / ATCC 700928 / UPEC).